The chain runs to 451 residues: Enolase (451 aa).

Q163 serves as a coordination point for (2R)-2-phosphoglycerate. E205 (proton donor) is an active-site residue. D258, E308, and D335 together coordinate Mg(2+). (2R)-2-phosphoglycerate contacts are provided by K360, R389, S390, and K411. Residue K360 is the Proton acceptor of the active site.

It belongs to the enolase family. It depends on Mg(2+) as a cofactor.

The protein localises to the cytoplasm. It localises to the secreted. It is found in the cell surface. The enzyme catalyses (2R)-2-phosphoglycerate = phosphoenolpyruvate + H2O. The protein operates within carbohydrate degradation; glycolysis; pyruvate from D-glyceraldehyde 3-phosphate: step 4/5. Catalyzes the reversible conversion of 2-phosphoglycerate (2-PG) into phosphoenolpyruvate (PEP). It is essential for the degradation of carbohydrates via glycolysis. In Mycoplasma capricolum subsp. capricolum (strain California kid / ATCC 27343 / NCTC 10154), this protein is Enolase.